Reading from the N-terminus, the 162-residue chain is uncharacterized protein (162 aa).

The protein localises to the cytoplasm. The protein resides in the nucleus. This is an uncharacterized protein from Schizosaccharomyces pombe (strain 972 / ATCC 24843) (Fission yeast).